A 453-amino-acid chain; its full sequence is MDWKEILRRRLATPSTSPHKKKSEQELKDEEMDLFTKYYSEWKGGRKNTNEFYKTIPRFYYRLPAEDEVLLQKLREESRAVFLQRKSRELLDNEELQNLWFLLDKHQTPPMIGEEAMINYENFLKVGEKAGPKCKQFFTAKVFAKLLHTDSYGRISIMQFFNYVMRKVWLHQTRIGLSLYDVAGQGYLRESDLENYILELIPTLPQLDGLEKSFYSFYVCTAVRKFFFFLDPLRTGKIKIQDILACSFLDDLLELRDEELSKESQETNWFSAPSALRVYGQYLNLDKDHNGMLSKEELSRYGTATMTNVFLDRVFQECLTYDGEMDYKTYLDFVLALENRKEPAALQYIFKLLDIENKGYLNVFSLNYFFRAIQELMKIHGQDPVSFQDVKDEIFDMVKPKDPLKISLQDLINSNQGDTVTTILIDLNGFWTYENREALVANDNENSTDLDDT.

EF-hand domains lie at 273 to 308 (PSALRVYGQYLNLDKDHNGMLSKEELSRYGTATMTN) and 341 to 376 (KEPAALQYIFKLLDIENKGYLNVFSLNYFFRAIQEL). Positions 286, 288, 290, 292, and 297 each coordinate Ca(2+).

As to quaternary structure, interacts with MCM3AP/GANP, PPP5C, and the phosphatase 2A core enzyme composed of the PPP2CA catalytic subunit and the constant regulatory subunit PPP2R1A. Finds in a complex with ABCB1, TFPI2 and PPP2R3C; leading to the dephosphorylation of ABCB1.

Its subcellular location is the nucleus. The protein resides in the cytoplasm. Its function is as follows. May regulate MCM3AP phosphorylation through phosphatase recruitment. May act as a negative regulator of ABCB1 expression and function through the dephosphorylation of ABCB1 by TFPI2/PPP2R3C complex. May play a role in the activation-induced cell death of B-cells. In Bos taurus (Bovine), this protein is Serine/threonine-protein phosphatase 2A regulatory subunit B'' subunit gamma (PPP2R3C).